The chain runs to 150 residues: Ribonuclease H (150 aa).

The RNase H type-1 domain maps to 3–144; sequence DKDMIEIWTD…ADGLARKGTD (142 aa). Residues Asp-12, Glu-50, Asp-72, and Asp-136 each coordinate Mg(2+). Positions 129–150 are disordered; that stretch reads DEGNERADGLARKGTDEVRGRK.

Belongs to the RNase H family. Monomer. The cofactor is Mg(2+).

It is found in the cytoplasm. The enzyme catalyses Endonucleolytic cleavage to 5'-phosphomonoester.. Functionally, endonuclease that specifically degrades the RNA of RNA-DNA hybrids. The protein is Ribonuclease H of Hyphomonas neptunium (strain ATCC 15444).